A 436-amino-acid polypeptide reads, in one-letter code: MHIAVVGLSHRTAPVEIREKLSIPEQTMETSLQTLRGNDQILEVSILSTCNRLEIYTLVRHPERGISAISDFLGQHSGLATEDLSPHLFNFHHDEAVAHLMRVAAGLDSLVLGEGQILSQVKKMVRLGQEHKSMGPILNRLLTQAVSTGKRVRSETNLGTGAVSISSAAVELAQLKLGQAQGEDQLMTLESELVAVVGAGRMSRLLLQHLQAKGCSGVMLLNRTRQRAEDLSADFPELPVECRPLDDLNHCLSTCSLVFTSTAADDPIVDASLLKQLKRRSFLRLIDIGVPRNIASDVVDVPGVESHDVDDLHEVVSRNQEARQQMAKEAEVVLQEETRLFLEWWDSLEAVPTINRLRATLEAIRAEELQKALSRMGPDFSARERKVVEALSKGIINKILHTPVTQLRAPQARPERQQALRVVASLFELDPPLENG.

Substrate contacts are provided by residues 49 to 52 (TCNR), S109, 114 to 116 (EGQ), and Q120. C50 functions as the Nucleophile in the catalytic mechanism. 198–203 (GAGRMS) is a binding site for NADP(+).

The protein belongs to the glutamyl-tRNA reductase family. Homodimer.

The enzyme catalyses (S)-4-amino-5-oxopentanoate + tRNA(Glu) + NADP(+) = L-glutamyl-tRNA(Glu) + NADPH + H(+). Its pathway is porphyrin-containing compound metabolism; protoporphyrin-IX biosynthesis; 5-aminolevulinate from L-glutamyl-tRNA(Glu): step 1/2. It functions in the pathway porphyrin-containing compound metabolism; chlorophyll biosynthesis. Functionally, catalyzes the NADPH-dependent reduction of glutamyl-tRNA(Glu) to glutamate 1-semialdehyde (GSA). The chain is Glutamyl-tRNA reductase from Prochlorococcus marinus (strain MIT 9313).